The sequence spans 404 residues: S-adenosylmethionine synthase (404 aa).

Histidine 16 provides a ligand contact to ATP. Aspartate 18 serves as a coordination point for Mg(2+). Glutamate 44 lines the K(+) pocket. Positions 57 and 100 each coordinate L-methionine. The interval 100–110 (QSPEINQGVAR) is flexible loop. ATP contacts are provided by residues 177–179 (DGK), aspartate 257, 263–264 (RK), alanine 280, and lysine 284. Aspartate 257 provides a ligand contact to L-methionine. Lysine 288 contributes to the L-methionine binding site.

This sequence belongs to the AdoMet synthase family. As to quaternary structure, homotetramer; dimer of dimers. It depends on Mg(2+) as a cofactor. K(+) is required as a cofactor.

It localises to the cytoplasm. The enzyme catalyses L-methionine + ATP + H2O = S-adenosyl-L-methionine + phosphate + diphosphate. The protein operates within amino-acid biosynthesis; S-adenosyl-L-methionine biosynthesis; S-adenosyl-L-methionine from L-methionine: step 1/1. In terms of biological role, catalyzes the formation of S-adenosylmethionine (AdoMet) from methionine and ATP. The overall synthetic reaction is composed of two sequential steps, AdoMet formation and the subsequent tripolyphosphate hydrolysis which occurs prior to release of AdoMet from the enzyme. This chain is S-adenosylmethionine synthase, found in Bifidobacterium adolescentis (strain ATCC 15703 / DSM 20083 / NCTC 11814 / E194a).